A 167-amino-acid chain; its full sequence is 2-C-methyl-D-erythritol 2,4-cyclodiphosphate synthase (167 aa).

The a divalent metal cation site is built by aspartate 10 and histidine 12. Residues 10 to 12 (DVH) and 36 to 37 (HS) contribute to the 4-CDP-2-C-methyl-D-erythritol 2-phosphate site. An a divalent metal cation-binding site is contributed by histidine 44. Residues 58–60 (NIG), 63–67 (FPNTN), 134–137 (TTSE), phenylalanine 141, and arginine 144 each bind 4-CDP-2-C-methyl-D-erythritol 2-phosphate.

It belongs to the IspF family. In terms of assembly, homotrimer. A divalent metal cation is required as a cofactor.

It catalyses the reaction 4-CDP-2-C-methyl-D-erythritol 2-phosphate = 2-C-methyl-D-erythritol 2,4-cyclic diphosphate + CMP. It functions in the pathway isoprenoid biosynthesis; isopentenyl diphosphate biosynthesis via DXP pathway; isopentenyl diphosphate from 1-deoxy-D-xylulose 5-phosphate: step 4/6. Involved in the biosynthesis of isopentenyl diphosphate (IPP) and dimethylallyl diphosphate (DMAPP), two major building blocks of isoprenoid compounds. Catalyzes the conversion of 4-diphosphocytidyl-2-C-methyl-D-erythritol 2-phosphate (CDP-ME2P) to 2-C-methyl-D-erythritol 2,4-cyclodiphosphate (ME-CPP) with a corresponding release of cytidine 5-monophosphate (CMP). This Azobacteroides pseudotrichonymphae genomovar. CFP2 protein is 2-C-methyl-D-erythritol 2,4-cyclodiphosphate synthase.